A 74-amino-acid chain; its full sequence is Protein translocase subunit SecE (74 aa).

Residues 1–36 are Cytoplasmic-facing; the sequence is MKTDFNQKIEQLKEFIEECRRVWLVLKKPTKDEYLA. The chain crosses the membrane as a helical span at residues 37 to 62; it reads VAKVTALGISLLGIIGYIIHVPATYI. At 63–74 the chain is on the extracellular side; that stretch reads KGILKPPTTPRV.

The protein belongs to the SecE/SEC61-gamma family. In terms of assembly, component of the Sec protein translocase complex. Heterotrimer consisting of alpha (SecY), beta (SecG) and gamma (SecE) subunits. The heterotrimers can form oligomers, although 1 heterotrimer is thought to be able to translocate proteins. Interacts with the ribosome. May interact with SecDF, and other proteins may be involved.

It is found in the cell membrane. In terms of biological role, essential subunit of the protein translocation channel SecYEG. Clamps together the 2 halves of SecY. May contact the channel plug during translocation. The polypeptide is Protein translocase subunit SecE (Methanocaldococcus jannaschii (strain ATCC 43067 / DSM 2661 / JAL-1 / JCM 10045 / NBRC 100440) (Methanococcus jannaschii)).